A 285-amino-acid chain; its full sequence is Nucleotide-binding protein PFLU_0879 (285 aa).

Gly-8 to Ser-15 provides a ligand contact to ATP. GTP is bound at residue Asp-60–Asn-63.

This sequence belongs to the RapZ-like family.

Its function is as follows. Displays ATPase and GTPase activities. In Pseudomonas fluorescens (strain SBW25), this protein is Nucleotide-binding protein PFLU_0879.